The sequence spans 783 residues: ATP-dependent DNA helicase Hel308 (783 aa).

Residues glutamine 29 and 47 to 54 (VPTASGKT) contribute to the ATP site. Residues 34-209 (ERGVTEGANL…WLDAELVDSD (176 aa)) form the Helicase ATP-binding domain. Residues 154–157 (DEVH) carry the DEAH box motif. The Helicase C-terminal domain occupies 242 to 443 (QTAAVVADTL…EPALRTHVLA (202 aa)). Residues 744 to 783 (ETVGHPDPGMDGVAADTDAAPESGGEAGGDEGQASLGDFS) form a disordered region.

It belongs to the helicase family. Hel308 subfamily. Monomer.

It carries out the reaction Couples ATP hydrolysis with the unwinding of duplex DNA by translocating in the 3'-5' direction.. The catalysed reaction is ATP + H2O = ADP + phosphate + H(+). DNA-dependent ATPase and 3'-5' DNA helicase that may be involved in repair of stalled replication forks. The polypeptide is ATP-dependent DNA helicase Hel308 (Halobacterium salinarum (strain ATCC 700922 / JCM 11081 / NRC-1) (Halobacterium halobium)).